A 431-amino-acid chain; its full sequence is Tryptophan synthase beta chain 2 (431 aa).

Residue Lys111 is modified to N6-(pyridoxal phosphate)lysine.

This sequence belongs to the TrpB family. As to quaternary structure, tetramer of two alpha and two beta chains. Requires pyridoxal 5'-phosphate as cofactor.

The enzyme catalyses (1S,2R)-1-C-(indol-3-yl)glycerol 3-phosphate + L-serine = D-glyceraldehyde 3-phosphate + L-tryptophan + H2O. The protein operates within amino-acid biosynthesis; L-tryptophan biosynthesis; L-tryptophan from chorismate: step 5/5. In terms of biological role, the beta subunit is responsible for the synthesis of L-tryptophan from indole and L-serine. The chain is Tryptophan synthase beta chain 2 (trpB2) from Sulfurisphaera tokodaii (strain DSM 16993 / JCM 10545 / NBRC 100140 / 7) (Sulfolobus tokodaii).